The primary structure comprises 690 residues: Eukaryotic translation initiation factor 3 subunit B (690 aa).

Residues 1 to 11 (MAKKKSEEHSG) are compositionally biased toward basic and acidic residues. Positions 1-33 (MAKKKSEEHSGTDANDSDYQEEPNFDDPPGFVD) are disordered. Positions 15-25 (NDSDYQEEPNF) are enriched in acidic residues. Positions 57–141 (SVVVVDNIPK…HTFAVNLFTD (85 aa)) constitute an RRM domain. 5 WD repeats span residues 207–246 (TRER…KIQK), 293–331 (DGMS…LLDL), 334–369 (IKIP…TLME), 442–484 (EIRE…KPSL), and 530–575 (PDHF…IKRT). A coiled-coil region spans residues 595–645 (EEKQKEIKKNLKKYYAAFEQKDRLRLTRASKELLEKRSQLRETFMEYRNKR).

It belongs to the eIF-3 subunit B family. As to quaternary structure, component of the eukaryotic translation initiation factor 3 (eIF-3) complex. The eIF-3 complex interacts with pix. Interacts with mxt.

It is found in the cytoplasm. In terms of biological role, RNA-binding component of the eukaryotic translation initiation factor 3 (eIF-3) complex, which is involved in protein synthesis of a specialized repertoire of mRNAs and, together with other initiation factors, stimulates binding of mRNA and methionyl-tRNAi to the 40S ribosome. The eIF-3 complex specifically targets and initiates translation of a subset of mRNAs involved in cell proliferation. The protein is Eukaryotic translation initiation factor 3 subunit B of Drosophila melanogaster (Fruit fly).